The primary structure comprises 358 residues: BAG family molecular chaperone regulator 1 (358 aa).

3 stretches are compositionally biased toward basic and acidic residues: residues 1 to 14 (MADR…RGDQ), 26 to 39 (SARE…RAER), and 85 to 94 (KVAHSKELTR). The interval 1 to 113 (MADRGGARRP…VTGTQEATQV (113 aa)) is disordered. 7 consecutive repeat copies span residues 102–111 (KKVTGTQEAT), 114–119 (EEVTTI), 120–125 (EEATQT), 126–131 (EEITVA), 132–137 (EEVTQT), 144–149 (EEMVQT), and 150–155 (EEMEPP). The interval 114-212 (EEVTTIEEAT…LIFKGKSLKE (99 aa)) is 7 X 6 AA tandem repeat of E-E-X(4). The Ubiquitin-like domain maps to 157-237 (LSVVVTHSNE…VMLIGEKSNP (81 aa)). Positions 185–232 (DLAQLVEEATGVPLPFQKLIFKGKSLKEMETPLSALGMQNGCRVMLIG) are interaction with HSPA8. An interaction with PPP1R15A region spans residues 229 to 358 (MLIGEKSNPE…LQSTNLALPE (130 aa)). In terms of domain architecture, BAG spans 259 to 339 (HLEELNKELS…VFLAECDTVE (81 aa)).

As to quaternary structure, homodimer. Forms a heteromeric complex with HSP70/HSC70. Binds to the ATPase domain of HSP/HSC70 chaperones. Interacts with NR3C1. Interacts with the N-terminal region of MAPRE2. Interacts with PPP1R15A. Interacts with BCL2 in an ATP-dependent manner. Interacts with SIAH1, SIAH2, HSPA8 (via NBD), HSPA1A (via NBD) and HSPA1B (via NBD). Interacts with ESR1; the interaction is promoted in the absence of estradiol (17-beta-estradiol/E2). Ubiquitinated; mediated by SIAH1 or SIAH2 and leading to its subsequent proteasomal degradation. In terms of tissue distribution, expressed in the CA1 region of the hippocampus (at protein level). Expressed in the uterus (at protein level).

It is found in the nucleus. Its subcellular location is the cytoplasm. Co-chaperone for HSP70 and HSC70 chaperone proteins. Acts as a nucleotide-exchange factor (NEF) promoting the release of ADP from the HSP70 and HSC70 proteins thereby triggering client/substrate protein release. Nucleotide release is mediated via its binding to the nucleotide-binding domain (NBD) of HSPA8/HSC70 where as the substrate release is mediated via its binding to the substrate-binding domain (SBD) of HSPA8/HSC70. Inhibits the pro-apoptotic function of PPP1R15A, and has anti-apoptotic activity. Markedly increases the anti-cell death function of BCL2 induced by various stimuli. Involved in the STUB1-mediated proteasomal degradation of ESR1 in response to age-related circulating estradiol (17-beta-estradiol/E2) decline, thereby promotes neuronal apoptosis in response to ischemic reperfusion injury. This Rattus norvegicus (Rat) protein is BAG family molecular chaperone regulator 1 (Bag1).